Reading from the N-terminus, the 442-residue chain is Asparagine--tRNA ligase (442 aa).

Belongs to the class-II aminoacyl-tRNA synthetase family. In terms of assembly, homodimer.

It is found in the cytoplasm. The catalysed reaction is tRNA(Asn) + L-asparagine + ATP = L-asparaginyl-tRNA(Asn) + AMP + diphosphate + H(+). The protein is Asparagine--tRNA ligase of Koribacter versatilis (strain Ellin345).